The primary structure comprises 948 residues: Isoleucine--tRNA ligase (948 aa).

The short motif at 58-68 (PYANGDIHIGH) is the 'HIGH' region element. E566 lines the L-isoleucyl-5'-AMP pocket. The short motif at 607-611 (KMSKS) is the 'KMSKS' region element. K610 contacts ATP. Zn(2+) is bound by residues C911, C914, C931, and C934.

Belongs to the class-I aminoacyl-tRNA synthetase family. IleS type 1 subfamily. In terms of assembly, monomer. Zn(2+) is required as a cofactor.

It is found in the cytoplasm. It carries out the reaction tRNA(Ile) + L-isoleucine + ATP = L-isoleucyl-tRNA(Ile) + AMP + diphosphate. Catalyzes the attachment of isoleucine to tRNA(Ile). As IleRS can inadvertently accommodate and process structurally similar amino acids such as valine, to avoid such errors it has two additional distinct tRNA(Ile)-dependent editing activities. One activity is designated as 'pretransfer' editing and involves the hydrolysis of activated Val-AMP. The other activity is designated 'posttransfer' editing and involves deacylation of mischarged Val-tRNA(Ile). The sequence is that of Isoleucine--tRNA ligase from Vibrio vulnificus (strain YJ016).